Here is a 21-residue protein sequence, read N- to C-terminus: Nigrocin-2HSa (21 aa).

C15 and C21 are oxidised to a cystine.

In terms of tissue distribution, expressed by the skin glands.

The protein localises to the secreted. In terms of biological role, has antibacterial activity against the Gram-positive bacterium S.aureus ATCC 25923 (MIC=56 uM) and the Gram-negative bacterium E.coli ATCC 25726 (MIC=28 uM). In Odorrana hosii (Hose's rock frog), this protein is Nigrocin-2HSa.